The chain runs to 162 residues: Transcription elongation factor GreA (162 aa).

The stretch at 45–74 (ENAEYEAAREKQAFIEGRIKELEDMTARAE) forms a coiled coil.

The protein belongs to the GreA/GreB family.

In terms of biological role, necessary for efficient RNA polymerase transcription elongation past template-encoded arresting sites. The arresting sites in DNA have the property of trapping a certain fraction of elongating RNA polymerases that pass through, resulting in locked ternary complexes. Cleavage of the nascent transcript by cleavage factors such as GreA or GreB allows the resumption of elongation from the new 3'terminus. GreA releases sequences of 2 to 3 nucleotides. The protein is Transcription elongation factor GreA of Rickettsia prowazekii (strain Madrid E).